Reading from the N-terminus, the 156-residue chain is D-aminoacyl-tRNA deacylase (156 aa).

Positions 139–140 (GP) match the Gly-cisPro motif, important for rejection of L-amino acids motif.

Belongs to the DTD family. As to quaternary structure, homodimer.

Its subcellular location is the cytoplasm. The catalysed reaction is glycyl-tRNA(Ala) + H2O = tRNA(Ala) + glycine + H(+). It catalyses the reaction a D-aminoacyl-tRNA + H2O = a tRNA + a D-alpha-amino acid + H(+). In terms of biological role, an aminoacyl-tRNA editing enzyme that deacylates mischarged D-aminoacyl-tRNAs. Also deacylates mischarged glycyl-tRNA(Ala), protecting cells against glycine mischarging by AlaRS. Acts via tRNA-based rather than protein-based catalysis; rejects L-amino acids rather than detecting D-amino acids in the active site. By recycling D-aminoacyl-tRNA to D-amino acids and free tRNA molecules, this enzyme counteracts the toxicity associated with the formation of D-aminoacyl-tRNA entities in vivo and helps enforce protein L-homochirality. This Marinobacter nauticus (strain ATCC 700491 / DSM 11845 / VT8) (Marinobacter aquaeolei) protein is D-aminoacyl-tRNA deacylase.